A 132-amino-acid chain; its full sequence is MRDSVLSVIFALALFLECYTPSMAIPMGKMEDTALEQDTLDSLLNEEVADKNPDSVRSGSSKIIVLADSGMWKNLNRGLPLYKLKAAAAGLDRALTLDRREADQDLSPSISIVRRDTMRCMVGRVYRPCWEV.

A signal peptide spans 1–24 (MRDSVLSVIFALALFLECYTPSMA). The cysteines at positions 120 and 129 are disulfide-linked.

It belongs to the melanin-concentrating hormone family. In terms of tissue distribution, pituitary gland. Produced in neurons of lateral basal hypothalamus which project both to the brain and to the neural lobe of the pituitary gland from where MCH is released.

Its function is as follows. Plays a role in skin pigmentation by antagonizing the action of melanotropin alpha. Induces melanin concentration within the melanophores. May participate in the control of the hypothalamo-pituitary adrenal gland axis by inhibiting the release of ACTH. This chain is Pro-MCH 2 (mch2), found in Oncorhynchus keta (Chum salmon).